The primary structure comprises 385 residues: 1-deoxy-D-xylulose 5-phosphate reductoisomerase (385 aa).

5 residues coordinate NADPH: threonine 10, glycine 11, serine 12, isoleucine 13, and asparagine 124. Lysine 125 provides a ligand contact to 1-deoxy-D-xylulose 5-phosphate. NADPH is bound at residue glutamate 126. Mn(2+) is bound at residue aspartate 150. 1-deoxy-D-xylulose 5-phosphate is bound by residues serine 151, glutamate 152, serine 176, and histidine 199. Glutamate 152 provides a ligand contact to Mn(2+). Position 205 (glycine 205) interacts with NADPH. 1-deoxy-D-xylulose 5-phosphate is bound by residues serine 212, asparagine 217, lysine 218, and glutamate 221. Glutamate 221 lines the Mn(2+) pocket.

It belongs to the DXR family. Requires Mg(2+) as cofactor. Mn(2+) serves as cofactor.

It carries out the reaction 2-C-methyl-D-erythritol 4-phosphate + NADP(+) = 1-deoxy-D-xylulose 5-phosphate + NADPH + H(+). Its pathway is isoprenoid biosynthesis; isopentenyl diphosphate biosynthesis via DXP pathway; isopentenyl diphosphate from 1-deoxy-D-xylulose 5-phosphate: step 1/6. Its function is as follows. Catalyzes the NADPH-dependent rearrangement and reduction of 1-deoxy-D-xylulose-5-phosphate (DXP) to 2-C-methyl-D-erythritol 4-phosphate (MEP). The sequence is that of 1-deoxy-D-xylulose 5-phosphate reductoisomerase from Clostridium botulinum (strain Eklund 17B / Type B).